Here is a 364-residue protein sequence, read N- to C-terminus: Aminomethyltransferase (364 aa).

The protein belongs to the GcvT family. As to quaternary structure, the glycine cleavage system is composed of four proteins: P, T, L and H.

The catalysed reaction is N(6)-[(R)-S(8)-aminomethyldihydrolipoyl]-L-lysyl-[protein] + (6S)-5,6,7,8-tetrahydrofolate = N(6)-[(R)-dihydrolipoyl]-L-lysyl-[protein] + (6R)-5,10-methylene-5,6,7,8-tetrahydrofolate + NH4(+). In terms of biological role, the glycine cleavage system catalyzes the degradation of glycine. The polypeptide is Aminomethyltransferase (Klebsiella pneumoniae subsp. pneumoniae (strain ATCC 700721 / MGH 78578)).